We begin with the raw amino-acid sequence, 201 residues long: Outer-membrane lipoprotein LolB (201 aa).

The first 18 residues, 1-18 (MKWCRLSIILMSLILLAG), serve as a signal peptide directing secretion. Cysteine 19 carries N-palmitoyl cysteine lipidation. Cysteine 19 carries the S-diacylglycerol cysteine lipid modification.

Belongs to the LolB family. In terms of assembly, monomer.

It localises to the cell outer membrane. In terms of biological role, plays a critical role in the incorporation of lipoproteins in the outer membrane after they are released by the LolA protein. The polypeptide is Outer-membrane lipoprotein LolB (Nitrosococcus oceani (strain ATCC 19707 / BCRC 17464 / JCM 30415 / NCIMB 11848 / C-107)).